A 141-amino-acid polypeptide reads, in one-letter code: Nucleoside diphosphate kinase (141 aa).

Residues Lys11, Phe59, Arg87, Thr93, Arg104, and Asn114 each coordinate ATP. His117 acts as the Pros-phosphohistidine intermediate in catalysis.

This sequence belongs to the NDK family. In terms of assembly, homotetramer. The cofactor is Mg(2+).

The protein resides in the cytoplasm. It catalyses the reaction a 2'-deoxyribonucleoside 5'-diphosphate + ATP = a 2'-deoxyribonucleoside 5'-triphosphate + ADP. The catalysed reaction is a ribonucleoside 5'-diphosphate + ATP = a ribonucleoside 5'-triphosphate + ADP. Functionally, major role in the synthesis of nucleoside triphosphates other than ATP. The ATP gamma phosphate is transferred to the NDP beta phosphate via a ping-pong mechanism, using a phosphorylated active-site intermediate. In Pseudomonas fluorescens (strain ATCC BAA-477 / NRRL B-23932 / Pf-5), this protein is Nucleoside diphosphate kinase.